The following is a 181-amino-acid chain: Putative adenylate kinase (181 aa).

5 residues coordinate ATP: Gly10, Gly12, Lys13, Ser14, and Thr15. The tract at residues 35-58 is NMP; it reads NITEVVSKNGLYLEKDIEMDSYVV. Residues 106 to 116 are LID; that stretch reads SRNYSSEKVKE. Residues Arg107 and Lys147 each contribute to the ATP site.

It belongs to the adenylate kinase family. AK6 subfamily. As to quaternary structure, interacts with uS11. Not a structural component of 40S pre-ribosomes, but transiently interacts with them by binding to uS11.

It carries out the reaction AMP + ATP = 2 ADP. It catalyses the reaction ATP + H2O = ADP + phosphate + H(+). Functionally, broad-specificity nucleoside monophosphate (NMP) kinase that catalyzes the reversible transfer of the terminal phosphate group between nucleoside triphosphates and monophosphates. Also has ATPase activity. Involved in the late maturation steps of the 30S ribosomal particles, specifically 16S rRNA maturation. While NMP activity is not required for ribosome maturation, ATPase activity is. Associates transiently with small ribosomal subunit protein uS11. ATP hydrolysis breaks the interaction with uS11. May temporarily remove uS11 from the ribosome to enable a conformational change of the ribosomal RNA that is needed for the final maturation step of the small ribosomal subunit. The sequence is that of Putative adenylate kinase from Methanococcus maripaludis (strain C7 / ATCC BAA-1331).